The primary structure comprises 141 residues: Small ribosomal subunit protein bS18c (141 aa).

2 disordered regions span residues 14–55 (EFIA…IKPG) and 120–141 (IKRR…RPKK). Positions 24-34 (PKAPLQPPLPP) are enriched in pro residues. Positions 35–51 (SKRKGKPPKSPRRRSSR) are enriched in basic residues.

This sequence belongs to the bacterial ribosomal protein bS18 family. As to quaternary structure, part of the 30S ribosomal subunit.

The protein localises to the plastid. It localises to the chloroplast. The chain is Small ribosomal subunit protein bS18c from Pelargonium hortorum (Common geranium).